The following is a 562-amino-acid chain: MFS-type transporter calB (562 aa).

Residues 1 to 16 show a composition bias toward polar residues; sequence MDEVTRTAQRSPSITE. Residues 1-45 form a disordered region; it reads MDEVTRTAQRSPSITETHAGETKLAGPGEKEGDVESPVDPSADSE. Residues 57–77 traverse the membrane as a helical segment; that stretch reads FAILASVTLSAFLMLLDGSII. An N-linked (GlcNAc...) asparagine glycan is attached at Asn83. Transmembrane regions (helical) follow at residues 94 to 113, 123 to 143, 154 to 174, 184 to 204, 213 to 233, 256 to 276, 284 to 304, 329 to 349, 362 to 382, 389 to 409, 418 to 438, 451 to 471, and 530 to 550; these read IGWY…PLSG, WTYL…GVAN, VAGL…AGAV, GIYL…GGAL, CFYI…FLQV, LIGF…LYYG, SSQV…FALW, INGA…PIYF, VNTL…GVLV, LPFA…VTLF, WIGY…MGII, VGIA…VVVG, and VFYL…GMGW. Asn557 carries an N-linked (GlcNAc...) asparagine glycan.

The protein belongs to the major facilitator superfamily. TCR/Tet family.

It localises to the cell membrane. Functionally, MFS-type transporter; part of the gene cluster that mediates the biosynthesis of calbistrin A and related compounds. Calbistrin A is a secondary metabolite with an interesting structure that was recently found to have bioactivity against leukemia cells. It consists of two polyketides linked by an ester bond: a bicyclic decalin containing polyketide and a linear 12 carbon dioic acid structure. Required for the secretion of calbistrin A and calbistrin C, as well as of related compounds decumbenone A, B and C. The sequence is that of MFS-type transporter calB from Penicillium decumbens.